An 896-amino-acid polypeptide reads, in one-letter code: Chromatin assembly factor 1 subunit A-A (896 aa).

Disordered stretches follow at residues 1–23 (MPGK…KKMV), 185–377 (TSTS…EEEK), and 552–610 (DSDE…DPEN). Polar residues predominate over residues 10–21 (VMQSSTKSNTKK). Positions 211-226 (ASVSSSSSPVSLSSPD) are enriched in low complexity. The span at 227–236 (AQTGSQFRNR) shows a compositional bias: polar residues. A compositionally biased stretch (low complexity) spans 237 to 246 (SSPSTSTTPT). A compositionally biased stretch (basic and acidic residues) spans 255–284 (SADKNKTKDKDKQRQAEKEERERAKKEARS). The span at 285–302 (AKKKKRQGLLKNLQRKRG) shows a compositional bias: basic residues. Positions 308 to 377 (SGKEYKKEKK…EEKRLKEEEK (70 aa)) are enriched in basic and acidic residues. Acidic residues-rich tracts occupy residues 552–563 (DSDEEWEEEEPG), 572–586 (ENDD…DDDG), and 595–607 (SDDE…ECTD). Residues 642–678 (CVWWDSKASEISLLQKFSACILESPAVDEELAQEISS) are necessary for homodimerization, competence for chromatin assembly. The tract at residues 724 to 743 (SDAAGNESTSPNVTPQTPSN) is disordered. Positions 729-743 (NESTSPNVTPQTPSN) are enriched in polar residues.

Belongs to the CHAF1A family. Homodimer.

The protein localises to the nucleus. Functionally, involved in chromatin assembly in DNA replication and DNA repair. This is Chromatin assembly factor 1 subunit A-A (chaf1a-a) from Xenopus laevis (African clawed frog).